The primary structure comprises 806 residues: N-terminal kinase-like protein (806 aa).

The Protein kinase domain maps to 14-314 (FELSPEPPEG…PEDFCRHKVL (301 aa)). HEAT repeat units follow at residues 350-388 (IIPV…VNTQ), 389-427 (IFPH…LNVE), and 507-545 (ILPV…EDPT). 2 disordered regions span residues 586 to 642 (RAHP…TADR) and 663 to 806 (DDWS…RKLD). A compositionally biased stretch (pro residues) spans 601–611 (RPVPEGNPAPA). Ser752 is subject to Phosphoserine. Positions 752-762 (SWGEDNWEGLE) are enriched in acidic residues. Residues 755–795 (EDNWEGLEAESRQVKAELARKKREERRREMEAKRAEKKTTK) adopt a coiled-coil conformation. Basic and acidic residues-rich tracts occupy residues 763–773 (AESRQVKAELA) and 780–793 (RRRE…EKKT). The segment at 791–806 (KKTTKGPMKLGARKLD) is interaction with COPB1.

This sequence belongs to the protein kinase superfamily. In terms of assembly, homooligomer. Interacts with GORAB. Interacts with COPA, COPB1 and COPB2. Interacts with AP2B1. In terms of tissue distribution, expressed in diaphragm, quadriceps, thymus, liver, lung, spleen, kidney, heart and brain. Prominently expressed in neurons, and enriched at central nervous system synapses and neuromuscular junctions.

Its subcellular location is the cytoplasm. The protein resides in the cytoskeleton. The protein localises to the microtubule organizing center. It localises to the centrosome. It is found in the endoplasmic reticulum-Golgi intermediate compartment. Its subcellular location is the golgi apparatus. The protein resides in the cis-Golgi network. Functionally, regulates COPI-mediated retrograde protein traffic at the interface between the Golgi apparatus and the endoplasmic reticulum. Involved in the maintenance of the Golgi apparatus morphology. The protein is N-terminal kinase-like protein (Scyl1) of Mus musculus (Mouse).